The chain runs to 629 residues: tRNA uridine 5-carboxymethylaminomethyl modification enzyme MnmG (629 aa).

13 to 18 contributes to the FAD binding site; it reads GGGHAG. 273-287 is an NAD(+) binding site; sequence GPRYCPSIEDKVNRF.

Belongs to the MnmG family. As to quaternary structure, homodimer. Heterotetramer of two MnmE and two MnmG subunits. The cofactor is FAD.

Its subcellular location is the cytoplasm. Its function is as follows. NAD-binding protein involved in the addition of a carboxymethylaminomethyl (cmnm) group at the wobble position (U34) of certain tRNAs, forming tRNA-cmnm(5)s(2)U34. This Shewanella pealeana (strain ATCC 700345 / ANG-SQ1) protein is tRNA uridine 5-carboxymethylaminomethyl modification enzyme MnmG.